The sequence spans 131 residues: Large ribosomal subunit protein bL19 (131 aa).

Belongs to the bacterial ribosomal protein bL19 family.

In terms of biological role, this protein is located at the 30S-50S ribosomal subunit interface and may play a role in the structure and function of the aminoacyl-tRNA binding site. This chain is Large ribosomal subunit protein bL19, found in Anaeromyxobacter dehalogenans (strain 2CP-C).